Consider the following 244-residue polypeptide: Electron transfer flavoprotein beta subunit lysine methyltransferase homolog (244 aa).

This sequence belongs to the methyltransferase superfamily. ETFBKMT family.

Functionally, probable methyltransferase. This is Electron transfer flavoprotein beta subunit lysine methyltransferase homolog from Caenorhabditis elegans.